We begin with the raw amino-acid sequence, 347 residues long: Probable RNA methyltransferase azo0122 (347 aa).

The active-site Proton acceptor is the glutamate 89. A Radical SAM core domain is found at 92–318 (LLLRDGLCVS…AKLRQSAGQD (227 aa)). Cysteine 99 and cysteine 323 form a disulfide bridge. Positions 106, 110, and 113 each coordinate [4Fe-4S] cluster. S-adenosyl-L-methionine is bound by residues 151–152 (GE), serine 181, 204–206 (SLH), and asparagine 280. Cysteine 323 serves as the catalytic S-methylcysteine intermediate.

It belongs to the radical SAM superfamily. RlmN family. Requires [4Fe-4S] cluster as cofactor.

It is found in the cytoplasm. The sequence is that of Probable RNA methyltransferase azo0122 from Azoarcus sp. (strain BH72).